We begin with the raw amino-acid sequence, 436 residues long: Transcription factor Sox-10 (436 aa).

Disordered regions lie at residues 1–55 (MSDD…ERFP), 145–183 (RLRM…AEGG), 195–257 (HLDH…DFGN), 322–346 (PQTD…QPST), and 413–436 (SPSV…LSRP). Lys44 participates in a covalent cross-link: Glycyl lysine isopeptide (Lys-Gly) (interchain with G-Cter in SUMO). Residues 48 to 88 (DSEDERFPVCIREAVSQVLSGYDWTLVPMPVRVNGGSKSKP) form a dimerization (DIM) region. The HMG box DNA-binding region spans 90–158 (VKRPMNAFMV…QHKKDHPDYK (69 aa)). The span at 145–159 (RLRMQHKKDHPDYKY) shows a compositional bias: basic and acidic residues. Composition is skewed to polar residues over residues 205–215 (SDGNSEHSAGQ) and 331–346 (KTES…QPST). A transactivation domain (TAM) region spans residues 209 to 295 (SEHSAGQSHG…NGHAGHPSHI (87 aa)). Residues 327 to 436 (KAQVKTESSS…QPVYTTLSRP (110 aa)) are transactivation domain (TAC). Residue Lys331 forms a Glycyl lysine isopeptide (Lys-Gly) (interchain with G-Cter in SUMO) linkage.

As to quaternary structure, interacts with the sumoylation factors ube2i/ubc9 and sumo1. Post-translationally, sumoylated.

It localises to the cytoplasm. Its subcellular location is the nucleus. Its function is as follows. Acts early in neural crest formation, functioning redundantly with the other group E Sox factors sox8 and sox9 to induce neural crest progenitors. Acts downstream of wnt-signaling at the neural plate border. Involved in the specification of neural crest progenitors fated to form the pigment cell lineage. This Xenopus tropicalis (Western clawed frog) protein is Transcription factor Sox-10.